The sequence spans 162 residues: MAQVKSSSKSDPNYKVVAENRRARFDYAIESDVECGIILEGSEVKSLREGGANIAESYAAVEDGELWLVNSYIAPYKQAKTFQHEERRRRKLLISRKQLSDFWNATQRKGMTLVPLVLYFNHRGMAKIKIGVAKGKKLHDKRETAAKRDWSRQKSRLMKDHG.

Residues 140 to 162 (DKRETAAKRDWSRQKSRLMKDHG) are disordered.

It belongs to the SmpB family.

It is found in the cytoplasm. Its function is as follows. Required for rescue of stalled ribosomes mediated by trans-translation. Binds to transfer-messenger RNA (tmRNA), required for stable association of tmRNA with ribosomes. tmRNA and SmpB together mimic tRNA shape, replacing the anticodon stem-loop with SmpB. tmRNA is encoded by the ssrA gene; the 2 termini fold to resemble tRNA(Ala) and it encodes a 'tag peptide', a short internal open reading frame. During trans-translation Ala-aminoacylated tmRNA acts like a tRNA, entering the A-site of stalled ribosomes, displacing the stalled mRNA. The ribosome then switches to translate the ORF on the tmRNA; the nascent peptide is terminated with the 'tag peptide' encoded by the tmRNA and targeted for degradation. The ribosome is freed to recommence translation, which seems to be the essential function of trans-translation. This is SsrA-binding protein from Roseobacter denitrificans (strain ATCC 33942 / OCh 114) (Erythrobacter sp. (strain OCh 114)).